A 1946-amino-acid polypeptide reads, in one-letter code: Sickle tail protein (1946 aa).

Disordered stretches follow at residues 1-83 (MEES…GMQP) and 113-176 (ERLR…VRSA). The segment covering 18-36 (DSRQMPQQGRSNLHVTSQE) has biased composition (polar residues). Residues 38 to 47 (AACRRPRERL) show a composition bias toward basic and acidic residues. At serine 169 the chain carries Phosphoserine. Position 244 is a phosphotyrosine (tyrosine 244). 2 disordered regions span residues 305-324 (HPPH…HSLP) and 339-374 (AIPG…RDVK). Positions 308 to 324 (HVIPNSPPSTPVPHSLP) are enriched in pro residues. A compositionally biased stretch (low complexity) spans 352–367 (SSLPVSRSISPSPSAI). Serine 357 carries an O-linked (GlcNAc) serine glycan. A phosphoserine mark is found at serine 361 and serine 365. Phosphotyrosine is present on tyrosine 393. The segment at 455 to 512 (SRKYPDSHLPTLGSKTPPASPHRVGDLRMIDLHPHLNTHGPPHTLQPDRASPSRQSFK) is disordered. Residue threonine 470 is modified to Phosphothreonine. Serine 474 carries the post-translational modification Phosphoserine. A compositionally biased stretch (basic and acidic residues) spans 477–488 (RVGDLRMIDLHP). Coiled-coil stretches lie at residues 557–581 (RETR…QSAL) and 644–685 (TSLL…ELEI). Serine 809 is subject to Phosphoserine. Disordered regions lie at residues 853 to 875 (EETA…DVKS) and 891 to 947 (SPVV…PVNG). Composition is skewed to polar residues over residues 891–909 (SPVV…NPAQ) and 927–947 (QEVT…PVNG). Residues 962 to 990 (SAKNRAVSIEKAEKKWEEKRQNLEHYNGK) adopt a coiled-coil conformation. A disordered region spans residues 1008–1221 (PNLEMPPASS…LRPSGPPKWE (214 aa)). A phosphoserine mark is found at serine 1032, serine 1035, serine 1038, and serine 1049. The span at 1049–1058 (SPPPPPPPPR) shows a compositional bias: pro residues. A compositionally biased stretch (polar residues) spans 1151–1162 (NPNSHAEQSRAN). Residues 1176 to 1194 (PKEKKNLEFYHEDVRKSDV) show a composition bias toward basic and acidic residues. Position 1466 is a phosphoserine (serine 1466). A coiled-coil region spans residues 1469-1495 (FEECDEELERMLTEEKIEEEEEDENED). Disordered regions lie at residues 1482–1567 (EEKI…VDDQ), 1622–1664 (AKRF…RKST), and 1691–1946 (VDTS…KETS). Residues 1484 to 1495 (KIEEEEEDENED) show a composition bias toward acidic residues. Residues 1498 to 1508 (VRTSSQMSCEQ) show a composition bias toward polar residues. Basic and acidic residues-rich tracts occupy residues 1509–1518 (VDSRSDRMGQ) and 1622–1644 (AKRF…RRQE). Positions 1659–1688 (EIRKSTYRTLDSLEQTIKQLENTISEMSPR) form a coiled coil. Polar residues predominate over residues 1739–1759 (KGSSTTPQTSRMPVPMTSKNR). Serine 1741 is modified (phosphoserine). Basic and acidic residues predominate over residues 1765–1777 (KASKQSKLQDPRQ). The span at 1806-1825 (ALSPSSGKSSSLPSASGDSS) shows a compositional bias: low complexity. Serine 1843 is modified (phosphoserine). A compositionally biased stretch (polar residues) spans 1851-1866 (HSASLIPSVSNGSLKF). Residues 1890–1899 (AAPTTSSSSS) show a composition bias toward low complexity. A phosphoserine mark is found at serine 1899, serine 1902, and serine 1905. Over residues 1920 to 1946 (HTPSLASYKAQNGSSSKATPSTAKETS) the composition is skewed to polar residues.

In terms of assembly, interacts with CPNE4 (via VWFA domain). Expressed predominantly in the notochord and mesonephros during embryogenesis as well as in other areas such as the epithalamus sulcus, lens vesicle, inner retinal layer, heart, hepatic primordial surface, infundibulum, surface ectoderm, hind gut and limb bud mesenchyme. In adults, expressed in a range of tissues including the nucleus pulposus, corpus callosum, kidney, cardiac muscle, Sertoli cells and hair follicles.

Its subcellular location is the cytoplasm. The protein localises to the cytoskeleton. It localises to the microtubule organizing center. The protein resides in the centrosome. Required for normal development of intervertebral disks. This is Sickle tail protein from Mus musculus (Mouse).